A 181-amino-acid chain; its full sequence is Ribulose bisphosphate carboxylase small subunit, chloroplastic 1 (181 aa).

Residues 1–54 constitute a chloroplast transit peptide; sequence MASSMLSSAAVVTSPAQATMVAPFTGLKSSSAFPVTRKANNDITSIVSNGGRVS.

Belongs to the RuBisCO small chain family. In terms of assembly, heterohexadecamer of 8 large and 8 small subunits.

Its subcellular location is the plastid. The protein localises to the chloroplast. Functionally, ruBisCO catalyzes two reactions: the carboxylation of D-ribulose 1,5-bisphosphate, the primary event in carbon dioxide fixation, as well as the oxidative fragmentation of the pentose substrate. Both reactions occur simultaneously and in competition at the same active site. Although the small subunit is not catalytic it is essential for maximal activity. The polypeptide is Ribulose bisphosphate carboxylase small subunit, chloroplastic 1 (Brassica napus (Rape)).